Consider the following 504-residue polypeptide: MAPKLDIILHPPENGEFYSSDDLISGTIVLDLTKSLSIKQIKVGLKGFTETTTKMDSEYVFPQNGMLGPATENKSYHNLVREERRVFPPDNVWDALEGSSKPFKVKPGHYEYMFQFNKLPSKPMCLKNHTKKTICFVSKSQSTMPPSFNTQWRELNKIDNLDLYFYSFGKIIYVVEVEIEMGRPRTWFKPFDKMLREPKIIEFIPEPKKFASNETVTRSGRNNHGVIDYISKNNSSKSLSAMQESEDGVTAIAPNGPDEKFLARNLDQLDINNDLEYEIEETEENPMKRYKCRYPLGLPDGASMMWVEVRSRDIDTIYRQDFLFRQGSGNFDNVYLIVKGNLSFSDFSNISVKPTRLQLNLLETVSYLSQGIGNENFSSLKLMEIDNLSKSDRPLFDTNELKFISSKNHEIMECEIKLKDNPILKRLQFNEEDYKHRGNRLYSFKTCVITRLFSYQLLIDWNINGQTRQTETIIPVQVFAHKRPPPVNEALPRYVEPPSYDDHV.

The protein belongs to the ART10 family.

The protein localises to the cytoplasm. Functionally, may regulate endocytosis by recruiting RSP5 ubiquitin ligase activity to specific plasma membrane proteins in response to extracellular stimuli. In Candida glabrata (strain ATCC 2001 / BCRC 20586 / JCM 3761 / NBRC 0622 / NRRL Y-65 / CBS 138) (Yeast), this protein is Arrestin-related trafficking adapter 10 (ART10).